Here is a 379-residue protein sequence, read N- to C-terminus: Cytochrome b (379 aa).

The next 4 membrane-spanning stretches (helical) occupy residues 33–53 (FGSL…FLAM), 77–98 (WLIR…FIHV), 113–133 (WNIG…GYVL), and 178–198 (FFAF…VHLL). Residues His83 and His97 each contribute to the heme b site. Residues His182 and His196 each contribute to the heme b site. Residue His201 participates in a ubiquinone binding. The next 4 membrane-spanning stretches (helical) occupy residues 226–246 (IKDL…ALFF), 288–308 (LGGV…PLLN), 320–340 (VTQT…WIGG), and 347–367 (FTMI…VLMP).

The protein belongs to the cytochrome b family. The cytochrome bc1 complex contains 11 subunits: 3 respiratory subunits (MT-CYB, CYC1 and UQCRFS1), 2 core proteins (UQCRC1 and UQCRC2) and 6 low-molecular weight proteins (UQCRH/QCR6, UQCRB/QCR7, UQCRQ/QCR8, UQCR10/QCR9, UQCR11/QCR10 and a cleavage product of UQCRFS1). This cytochrome bc1 complex then forms a dimer. It depends on heme b as a cofactor.

Its subcellular location is the mitochondrion inner membrane. Component of the ubiquinol-cytochrome c reductase complex (complex III or cytochrome b-c1 complex) that is part of the mitochondrial respiratory chain. The b-c1 complex mediates electron transfer from ubiquinol to cytochrome c. Contributes to the generation of a proton gradient across the mitochondrial membrane that is then used for ATP synthesis. This chain is Cytochrome b (MT-CYB), found in Akodon iniscatus (Intelligent grass mouse).